The primary structure comprises 300 residues: Acetylglutamate kinase (300 aa).

Residues 68-69 (GG), Arg90, and Asn194 each bind substrate.

It belongs to the acetylglutamate kinase family. ArgB subfamily.

Its subcellular location is the cytoplasm. It catalyses the reaction N-acetyl-L-glutamate + ATP = N-acetyl-L-glutamyl 5-phosphate + ADP. Its pathway is amino-acid biosynthesis; L-arginine biosynthesis; N(2)-acetyl-L-ornithine from L-glutamate: step 2/4. Its function is as follows. Catalyzes the ATP-dependent phosphorylation of N-acetyl-L-glutamate. This chain is Acetylglutamate kinase, found in Methanocella arvoryzae (strain DSM 22066 / NBRC 105507 / MRE50).